A 143-amino-acid polypeptide reads, in one-letter code: uncharacterized protein (143 aa).

The active site involves Cys12.

The protein belongs to the ArsC family.

This is an uncharacterized protein from Rhodospirillum rubrum.